A 366-amino-acid chain; its full sequence is Putative F-box protein At1g26515 (366 aa).

The interval 1–20 (MKTRSKKTKTENNQEKSKEK) is disordered. Residues 8 to 20 (TKTENNQEKSKEK) show a composition bias toward basic and acidic residues. The 47-residue stretch at 20 to 66 (KNKFDQLPLDLEIEIFRRLPLKSVARFLTLSKSCAATIRSPSFITSF) folds into the F-box domain.

This Arabidopsis thaliana (Mouse-ear cress) protein is Putative F-box protein At1g26515.